The primary structure comprises 276 residues: Shikimate dehydrogenase (NADP(+)) (276 aa).

Shikimate is bound by residues Ser-18–Ser-20 and Thr-65. Lys-69 acts as the Proton acceptor in catalysis. Residues Asn-90 and Asp-106 each coordinate shikimate. Residues Gly-132–Ala-136 and Ile-221 contribute to the NADP(+) site. Shikimate is bound at residue Tyr-223. Gly-244 is a binding site for NADP(+).

Belongs to the shikimate dehydrogenase family. Homodimer.

The catalysed reaction is shikimate + NADP(+) = 3-dehydroshikimate + NADPH + H(+). It participates in metabolic intermediate biosynthesis; chorismate biosynthesis; chorismate from D-erythrose 4-phosphate and phosphoenolpyruvate: step 4/7. Functionally, involved in the biosynthesis of the chorismate, which leads to the biosynthesis of aromatic amino acids. Catalyzes the reversible NADPH linked reduction of 3-dehydroshikimate (DHSA) to yield shikimate (SA). The protein is Shikimate dehydrogenase (NADP(+)) of Paramagnetospirillum magneticum (strain ATCC 700264 / AMB-1) (Magnetospirillum magneticum).